The following is a 465-amino-acid chain: MRTKQLWQVALGDLAKRVSRANFETWLKHTELVALEGERATIAAPSSFAAEQLRNKFAADIQETLSLLLGRPIAVHFTVHGQDDEEHPVQRRPQRRALASEEGSASKQLSLTPSPEHGLNPRYTFEKFVVGPNNRLAHAAALAVADRPGEKFNPLFIYGGVGLGKTHLLHAIGHRALANRPTLKVCYVSSEVFTNELINAIRHQRTDDFRNRYRTIDILMIDDIQFIAGKESTQEEFFHTFNALYQSGKQIVISSDRPPRLIPDLADRLRSRFEGGLLADIQPPDLETRQAILIEKGRELGVQMPSDVVEFVARRIESNIRELEGALNRIVALAQLTHQPITLALAVEALREGDARAVREQLTPELVLHAVCQHFRVSLAELVGPGRRREIVLPRQIAMYLLREELGLSLVEIGQRLGGRDHTTVLHGVDKVEEQLRSDEQLRADVLAVRARLYEDAKAPLASRH.

The interval 1 to 72 (MRTKQLWQVA…ETLSLLLGRP (72 aa)) is domain I, interacts with DnaA modulators. The interval 72–117 (PIAVHFTVHGQDDEEHPVQRRPQRRALASEEGSASKQLSLTPSPEH) is domain II. The disordered stretch occupies residues 80–118 (HGQDDEEHPVQRRPQRRALASEEGSASKQLSLTPSPEHG). Polar residues predominate over residues 103–113 (GSASKQLSLTP). The tract at residues 118-334 (GLNPRYTFEK…GALNRIVALA (217 aa)) is domain III, AAA+ region. G162, G164, K165, and T166 together coordinate ATP. Positions 335–465 (QLTHQPITLA…DAKAPLASRH (131 aa)) are domain IV, binds dsDNA.

Belongs to the DnaA family. Oligomerizes as a right-handed, spiral filament on DNA at oriC.

Its subcellular location is the cytoplasm. Its function is as follows. Plays an essential role in the initiation and regulation of chromosomal replication. ATP-DnaA binds to the origin of replication (oriC) to initiate formation of the DNA replication initiation complex once per cell cycle. Binds the DnaA box (a 9 base pair repeat at the origin) and separates the double-stranded (ds)DNA. Forms a right-handed helical filament on oriC DNA; dsDNA binds to the exterior of the filament while single-stranded (ss)DNA is stabiized in the filament's interior. The ATP-DnaA-oriC complex binds and stabilizes one strand of the AT-rich DNA unwinding element (DUE), permitting loading of DNA polymerase. After initiation quickly degrades to an ADP-DnaA complex that is not apt for DNA replication. Binds acidic phospholipids. The protein is Chromosomal replication initiator protein DnaA of Thermomicrobium roseum (strain ATCC 27502 / DSM 5159 / P-2).